Reading from the N-terminus, the 109-residue chain is Nucleoid-associated protein CC_0268 (109 aa).

This sequence belongs to the YbaB/EbfC family. In terms of assembly, homodimer.

Its subcellular location is the cytoplasm. The protein localises to the nucleoid. Its function is as follows. Binds to DNA and alters its conformation. May be involved in regulation of gene expression, nucleoid organization and DNA protection. In Caulobacter vibrioides (strain ATCC 19089 / CIP 103742 / CB 15) (Caulobacter crescentus), this protein is Nucleoid-associated protein CC_0268.